The sequence spans 91 residues: Putative septation protein SpoVG (91 aa).

The protein belongs to the SpoVG family.

In terms of biological role, could be involved in septation. This is Putative septation protein SpoVG from Clostridium beijerinckii (strain ATCC 51743 / NCIMB 8052) (Clostridium acetobutylicum).